Consider the following 29-residue polypeptide: Cyclotide mra2 (29 aa).

3 cysteine pairs are disulfide-bonded: C4/C19, C8/C21, and C13/C26.

This is a cyclic peptide. In terms of processing, contains 3 disulfide bonds.

Probably participates in a plant defense mechanism. The protein is Cyclotide mra2 of Melicytus ramiflorus (Whitey wood).